The chain runs to 363 residues: Ferredoxin--NADP reductase, cyanelle (363 aa).

The N-terminal 65 residues, 1–65, are a transit peptide targeting the cyanelle; it reads MAFVASVPVF…TFEVDTTIRA (65 aa). Residues 84–206 enclose the FAD-binding FR-type domain; that stretch reads ANPYIGKCIY…TGPVGTTMLM (123 aa). FAD-binding positions include 142 to 145, 163 to 165, tyrosine 169, 180 to 182, and threonine 221; these read RLYS, SVK, and VCS. The NADP(+) site is built by serine 145 and lysine 165. NADP(+)-binding positions include threonine 221, 253-254, 283-284, lysine 293, 322-323, and glutamate 361; these read VP, SR, and GL.

This sequence belongs to the ferredoxin--NADP reductase type 1 family. The cofactor is FAD.

The protein resides in the plastid. It is found in the cyanelle stroma. It localises to the cyanelle thylakoid membrane. The catalysed reaction is 2 reduced [2Fe-2S]-[ferredoxin] + NADP(+) + H(+) = 2 oxidized [2Fe-2S]-[ferredoxin] + NADPH. Its function is as follows. May play a key role in regulating the relative amounts of cyclic and non-cyclic electron flow to meet the demands of the plant for ATP and reducing power. The polypeptide is Ferredoxin--NADP reductase, cyanelle (PETH) (Cyanophora paradoxa).